The sequence spans 907 residues: Protein MEI2-like 4 (907 aa).

The segment at 28–58 (QFGFMKNNPMPEGGVDRSSNLPTSSWTSDSY) is disordered. Positions 44 to 54 (RSSNLPTSSWT) are enriched in polar residues. RRM domains lie at 211–284 (RILF…YSIP) and 295–368 (GALW…PTCP). The interval 856 to 907 (AGPNAGDQEPFPMGSNIRSRPGKHRTNSIENYTNFSSSSDNRDEPANGNDSM) is disordered. A compositionally biased stretch (polar residues) spans 883–894 (SIENYTNFSSSS).

In terms of biological role, probable RNA-binding protein that plays a role in meiosis and vegetative growth. The protein is Protein MEI2-like 4 (ML4) of Arabidopsis thaliana (Mouse-ear cress).